A 218-amino-acid chain; its full sequence is uncharacterized protein (218 aa).

The next 4 membrane-spanning stretches (helical) occupy residues Ile-10 to Ile-30, Ile-55 to Ile-75, Val-147 to Ala-167, and Phe-175 to Arg-195.

The protein belongs to the DedA family.

The protein localises to the cell membrane. This is an uncharacterized protein from Mycobacterium tuberculosis (strain CDC 1551 / Oshkosh).